The sequence spans 594 residues: Glutamate decarboxylase 1 (594 aa).

Low complexity predominate over residues 1-13; it reads MASSTPSSSATSS. The tract at residues 1 to 23 is disordered; it reads MASSTPSSSATSSNAGADPNTTN. S78 carries the phosphoserine modification. 4-aminobutanoate is bound at residue 190–192; sequence QLS. An N6-(pyridoxal phosphate)lysine modification is found at K405. R567 serves as a coordination point for 4-aminobutanoate.

It belongs to the group II decarboxylase family. In terms of assembly, homodimer. Requires pyridoxal 5'-phosphate as cofactor.

It catalyses the reaction L-glutamate + H(+) = 4-aminobutanoate + CO2. Catalyzes the synthesis of the inhibitory neurotransmitter gamma-aminobutyric acid (GABA) with pyridoxal 5'-phosphate as cofactor. This Felis catus (Cat) protein is Glutamate decarboxylase 1 (GAD1).